The sequence spans 1078 residues: Exportin-1 (1078 aa).

An Importin N-terminal domain is found at 34–100 (AQQVLTQFQA…RNYIVAVMIK (67 aa)).

It belongs to the exportin family. In terms of assembly, interacts with php4.

The protein resides in the nucleus. Functionally, receptor for the leucine-rich nuclear export signal (NES). This Schizosaccharomyces pombe (strain 972 / ATCC 24843) (Fission yeast) protein is Exportin-1 (xpo1).